We begin with the raw amino-acid sequence, 381 residues long: Guanine nucleotide-binding protein G(olf) subunit alpha (381 aa).

The tract at residues 1–25 (MGCLGGNSKTTEDQGVDEKERREAN) is disordered. The N-palmitoyl glycine moiety is linked to residue Gly2. Cys3 is lipidated: S-palmitoyl cysteine. Residues 10 to 25 (TTEDQGVDEKERREAN) show a composition bias toward basic and acidic residues. The 341-residue stretch at 41–381 (ATHRLLLLGA…RMHLKQYELL (341 aa)) folds into the G-alpha domain. The G1 motif stretch occupies residues 44–57 (RLLLLGAGESGKST). Residues Glu52, Ser53, Gly54, Lys55, Ser56, and Thr57 each contribute to the GTP site. Ser56 provides a ligand contact to Mg(2+). Thr178 carries the phosphothreonine modification. Residues 183–191 (DLLRCRVLT) form a G2 motif region. Residues Leu185 and Arg186 each contribute to the GTP site. An ADP-ribosylarginine; by cholera toxin modification is found at Arg188. Thr191 contacts GTP. Residues Thr191 and Asp210 each coordinate Mg(2+). Residues 206–215 (FHMFDVGGQR) are G3 motif. GTP-binding residues include Gly213, Asn279, Lys280, Asp282, and Ala353. Positions 275–282 (ILFLNKQD) are G4 motif. The interval 351–356 (TCAVDT) is G5 motif.

This sequence belongs to the G-alpha family. G(s) subfamily. As to quaternary structure, g proteins are composed of 3 units; alpha, beta and gamma. The alpha chain contains the guanine nucleotide binding site. Interacts with GAS2L2. Interacts (GDP-bound form) with RIC8B (via C-terminus); promoting GNAL folding and association with the plasma membrane. Detected in olfactory neuroepithelium, brain, testis, and to a lower extent in retina, lung alveoli, spleen. Trace amounts where seen in kidney, adrenal gland and liver. Found to be expressed in all the insulinomas examined.

It localises to the cell membrane. The catalysed reaction is GTP + H2O = GDP + phosphate + H(+). In terms of biological role, guanine nucleotide-binding protein (G protein) involved as transducer in olfactory signal transduction controlled by G protein-coupled receptors (GPCRs). Contains the guanine nucleotide binding site and alternates between an active, GTP-bound state and an inactive, GDP-bound state. Signaling by an activated GPCR promotes GDP release and GTP binding. The alpha subunit has a low GTPase activity that converts bound GTP to GDP, thereby terminating the signal. Both GDP release and GTP hydrolysis are modulated by numerous regulatory proteins. GNAL/G(olf) alpha specifically mediates olfactory signal transduction within the olfactory neuroepithelium and the basal ganglia following GPCRs activation. Acts by promoting the specific activation of adenylyl cyclase ADCY3, resulting in increased levels of the signaling molecule cAMP. This Homo sapiens (Human) protein is Guanine nucleotide-binding protein G(olf) subunit alpha.